The chain runs to 365 residues: tRNA N6-adenosine threonylcarbamoyltransferase (365 aa).

Residues histidine 122 and histidine 126 each contribute to the Fe cation site. Substrate is bound by residues leucine 147–glycine 151, aspartate 180, glycine 193, and asparagine 293. Aspartate 321 contacts Fe cation. Residues proline 340–serine 365 form a disordered region.

The protein belongs to the KAE1 / TsaD family. Fe(2+) is required as a cofactor.

The protein resides in the cytoplasm. It carries out the reaction L-threonylcarbamoyladenylate + adenosine(37) in tRNA = N(6)-L-threonylcarbamoyladenosine(37) in tRNA + AMP + H(+). In terms of biological role, required for the formation of a threonylcarbamoyl group on adenosine at position 37 (t(6)A37) in tRNAs that read codons beginning with adenine. Is involved in the transfer of the threonylcarbamoyl moiety of threonylcarbamoyl-AMP (TC-AMP) to the N6 group of A37, together with TsaE and TsaB. TsaD likely plays a direct catalytic role in this reaction. This chain is tRNA N6-adenosine threonylcarbamoyltransferase, found in Gluconobacter oxydans (strain 621H) (Gluconobacter suboxydans).